The following is a 227-amino-acid chain: 7-cyano-7-deazaguanine synthase (227 aa).

Residue 11–21 (VSGGMDSAALL) coordinates ATP. The Zn(2+) site is built by Cys-192, Cys-200, Cys-203, and Cys-206.

Belongs to the QueC family. The cofactor is Zn(2+).

The catalysed reaction is 7-carboxy-7-deazaguanine + NH4(+) + ATP = 7-cyano-7-deazaguanine + ADP + phosphate + H2O + H(+). The protein operates within purine metabolism; 7-cyano-7-deazaguanine biosynthesis. Catalyzes the ATP-dependent conversion of 7-carboxy-7-deazaguanine (CDG) to 7-cyano-7-deazaguanine (preQ(0)). This is 7-cyano-7-deazaguanine synthase from Persephonella marina (strain DSM 14350 / EX-H1).